We begin with the raw amino-acid sequence, 180 residues long: Small ribosomal subunit protein bS16 (180 aa).

This sequence belongs to the bacterial ribosomal protein bS16 family.

The polypeptide is Small ribosomal subunit protein bS16 (Flavobacterium psychrophilum (strain ATCC 49511 / DSM 21280 / CIP 103535 / JIP02/86)).